A 282-amino-acid chain; its full sequence is Shikimate dehydrogenase (NADP(+)) (282 aa).

Shikimate contacts are provided by residues 18–20 and Thr65; that span reads SRS. Lys69 serves as the catalytic Proton acceptor. Glu81 contacts NADP(+). Shikimate-binding residues include Asn90 and Asp105. NADP(+)-binding positions include 130–134, 154–159, and Met222; these read GAGGA and NRTPAR. A shikimate-binding site is contributed by Tyr224. Gly245 lines the NADP(+) pocket.

The protein belongs to the shikimate dehydrogenase family. Homodimer.

It catalyses the reaction shikimate + NADP(+) = 3-dehydroshikimate + NADPH + H(+). Its pathway is metabolic intermediate biosynthesis; chorismate biosynthesis; chorismate from D-erythrose 4-phosphate and phosphoenolpyruvate: step 4/7. Functionally, involved in the biosynthesis of the chorismate, which leads to the biosynthesis of aromatic amino acids. Catalyzes the reversible NADPH linked reduction of 3-dehydroshikimate (DHSA) to yield shikimate (SA). In Acidovorax sp. (strain JS42), this protein is Shikimate dehydrogenase (NADP(+)).